Reading from the N-terminus, the 407-residue chain is MTGRVCVLVMDSFGIGASLDAARYGDVGANTLVHIYEACKRGECDIDGVRKGSLMLPNLASKGLYHAAMASSGLPFIDLSALAIPSGYYGYAVEQSLGKDTPSGHWEMAGVPVTFEWGYFPDKPYCFPEELISEFIKQCNLPGVLGEKHASGTIIIDELGEEHIRTGKPIVYTSADSVFQIAAHEEAFGLQRLYDICKIARNLVDKYQIGRVIARPFAGKPGSFKRTGNRKDYATPPPEKTLLDFLKEDGREVIAIGKIADIYAHQGVTQEIKADGNMALFDATLSAMKTAPQGSLVFTNFVDFDSSYGHRRDVAGYAHALEQFDARLPELEVLLQPNDMVFIAADHGCDPTFPGSDHTREHIPVLMFGPQVNSKFIGRRDCFADIGQSIAEHLQLSSPLAHGVSFL.

Mn(2+)-binding residues include Asp-11, Asp-305, His-310, Asp-346, His-347, and His-358.

It belongs to the phosphopentomutase family. The cofactor is Mn(2+).

The protein localises to the cytoplasm. It catalyses the reaction 2-deoxy-alpha-D-ribose 1-phosphate = 2-deoxy-D-ribose 5-phosphate. The catalysed reaction is alpha-D-ribose 1-phosphate = D-ribose 5-phosphate. It functions in the pathway carbohydrate degradation; 2-deoxy-D-ribose 1-phosphate degradation; D-glyceraldehyde 3-phosphate and acetaldehyde from 2-deoxy-alpha-D-ribose 1-phosphate: step 1/2. Isomerase that catalyzes the conversion of deoxy-ribose 1-phosphate (dRib-1-P) and ribose 1-phosphate (Rib-1-P) to deoxy-ribose 5-phosphate (dRib-5-P) and ribose 5-phosphate (Rib-5-P), respectively. In Legionella pneumophila (strain Corby), this protein is Phosphopentomutase.